Here is a 246-residue protein sequence, read N- to C-terminus: Cell division protein ZapD (246 aa).

It belongs to the ZapD family. In terms of assembly, interacts with FtsZ.

The protein localises to the cytoplasm. Functionally, cell division factor that enhances FtsZ-ring assembly. Directly interacts with FtsZ and promotes bundling of FtsZ protofilaments, with a reduction in FtsZ GTPase activity. The chain is Cell division protein ZapD from Vibrio atlanticus (strain LGP32) (Vibrio splendidus (strain Mel32)).